A 501-amino-acid chain; its full sequence is TNF receptor-associated factor 2 (501 aa).

Residue alanine 2 is modified to N-acetylalanine. Serine 5 carries the phosphoserine modification. Threonine 7 bears the Phosphothreonine mark. At serine 11 the chain carries Phosphoserine. Threonine 22 is subject to Phosphothreonine. A Glycyl lysine isopeptide (Lys-Gly) (interchain with G-Cter in ubiquitin) cross-link involves residue lysine 31. The RING-type zinc-finger motif lies at 34-73; that stretch reads CSACKNILRRPFQAQCGHRYCSFCLTSILSSGPQNCAACV. Position 117 is a phosphothreonine; by PKC (threonine 117). 2 TRAF-type zinc fingers span residues 124–180 and 177–233; these read CHEG…VHYE and VHYE…ENLQ. Positions 283 to 293 are important for interaction with BIRC2 and BIRC3; sequence ENIVCVLNREV. Residues 298–348 adopt a coiled-coil conformation; it reads VTAEACSRQHRLDQDKIEALSNKVQQLERSIGLKDLAMADLEQKVSELEVS. Residue lysine 320 forms a Glycyl lysine isopeptide (Lys-Gly) (interchain with G-Cter in ubiquitin) linkage. In terms of domain architecture, MATH spans 351–496; sequence DGVFIWKISD…DDAIFIKAIV (146 aa).

The protein belongs to the TNF receptor-associated factor family. A subfamily. Homotrimer. Heterotrimer with TRAF1. Heterotrimer with TRAF3 (via TRAF domain). The domain containing the RING-type and the first TRAF-type zinc finger can also form homodimers (in vitro). Interacts with TNFRSF1B/TNFR2. Interacts with TNFRSF5/CD40. Interacts with TNFRSF4, TNFRSF7/CD27, TNFRSF8/CD30, TNFRSF9/CD137, TNFRSF11A/RANK, TNFRSF13B/TACI, TNFRSF14, TNFRSF16/NGFR, TNFRSF17/BCMA, TNFRSF18/AITR, TNFRSF19/TROY, TNFRSF19L/RELT and EDAR. Stimulation of TNF-alpha receptor TNFRSF1A leads to the formation of two distinct signaling complexes. Plasma membrane-bound complex I is composed of TNFRSF1A, TRADD, RIPK1, TRAF2 and BIRC2/c-IAP1 or BIRC3 which interacts with CHUCK/IKK-alpha, IKBKB/IKK-beta and IKBKG/IKK-gamma promoting cell survival. Subsequently, TRADD, RIPK1 and TRAF2 dissociate from TNFRSF1A and form cytoplasmic complex II with FADD and caspase CASP8 promoting cell apoptosis. Interacts with TRADD. Identified in a complex with TNFRSF1A, RIPK1 and IKBKB/IKK-beta. Interacts with RIPK2. Interacts with BIRC2 and BIRC3 N-terminus; a single BIRC2 or BIRC3 molecule interacts with a heterotrimer formed by TRAF1 and TRAF2, or a TRAF2 homotrimer. Identified in a complex composed of TRAF2, TRAF3, BIRC2 and BIRC3. Interacts with BIRC2; the interaction promotes BIRC2 stability. Interaction with BIRC2 and/or BIRC3 is essential for ubiquitination of IKBKE, degradation of NFKBIA and activation of NF-kappa-B. Within complex I, phosphorylated TRAF2 interacts (via 'Lys-63'-linked polyubiquitin chains) with CHUCK/IKK-alpha, IKBKB/IKK-beta, IKBKG/IKK-gamma TAB2, TAB3 and TAK1 in response to TNF-alpha stimulation. Within complex I, interacts with UXT isoform 1 (via TPQE motif); the interaction prevents the recruitment of FADD and CASP8/caspase 8 to complex I. Forms a complex composed of TNFRSF8/CD30 or TNFRSF1B/TNFR2, and TRAF1, TRAF2 and E3 ligase TRAIP. Within the complex, interacts with TRAIP; the interaction inhibits TRAF2-mediated NF-kappa B activation. Component of a complex composed of TANK and TBK1. Interacts with TRPC4AP. Interacts with MAP3K1/MEKK1, MAP3K5/ASK1 and MAP3K11/MLK3 in response to TNF-alpha stimulation; the interaction leads to JNK activation and interaction with MAP3K5 is inhibited by PRMT1. Component of a complex composed of MAP3K14/NIK BIRC3 and TRAF3; the interaction leads to BIRC2/3-mediated ubiquitination of TRAF3 upon CD40 engagement in a TRAF2-dependent manner. Interacts with MAP3K14/NIK in response to TNF-alpha stimulation; the interaction leads to NF-kappa B activation. Interacts with PEG3; the interaction may promote TRAF2-mediated NF-kappa B activation. Interacts with HIVEP3; the interaction may inhibit TNF-alpha-TRAF2-mediated NF-kappa B and JNK activation. Interacts with TANK/ITRAF; the interaction prevents interaction between TNFRSF1B/TNFR2 and TRAF2. Interacts with deubiquitinating enzyme CYLD; the interaction results in the deubiquitination and inactivation of TRAF2. Interacts with SIAH2; the interaction leads to TRAF2 ubiquitination and degradation. Interacts with E2 conjugating enzyme UBE2N/Ubc13, E3 ligase ITCH and RNF11 in response to TNF-alpha stimulation. Interacts with ubiquitin-editing enzyme TNFAIP3/A20 in response to TNF-alpha stimulation; the interaction promotes TRAF2 dissociation from UBE2N/Ubc13, ITCH, RNF11 and TAX1BP1 and prevents prolonged TRAF-2 ubiquitination. Interacts with TAX1BP1 in response to TNF-alpha stimulation; the interaction promotes TRAF2 dissociation from UBE2N/Ubc13 and TNFAIP3/A20, and prevents prolonged TRAF-2 ubiquitination. Interacts (via C-terminus) with EIF2AK2/PKR (via the kinase catalytic domain). Interacts with deubiquitinating enzyme USP48. Interacts with PTPN2; probably involved in TNF-mediated signaling. Interacts with Toll-like receptor TLR4/3 adapter TICAM1/TRIF; the interaction may promote TICAM1 ubiquitination. Interacts with kinase/endoribonuclease ERN1/IRE1 and DAB2IP in response to ER stress; the interaction requires DAB2IP. Interacts with ERN1/IRE1 and TAOK3 in response to ER stress; the interaction may promote TRAF2 phosphorylation. Interacts (via zinc fingers) with DAB2IP (via C-terminus PER domain) in response to TNF-alpha stimulation. Interacts with CASP8AP2/FLASH. Interacts with NFATC2IP; the interaction may repress IL-4 production in T cells. Interacts with kinase CDK9. Interacts with sphingosine kinase 1 SPHK1. Interacts with kinase TNIK. Interacts with TRAFD1. Interacts with DNA phosphodiesterase TDP2. Interacts with MAVS/IPS1. Interacts with CARD14. Interacts with GPS2. Interacts with XPNPEP3. Interacts with RIPK3. Interacts with RELL2. Interacts with LRRC19. Interacts with GAPDH; promoting TRAF2 ubiquitination. Phosphorylated at several serine residues within the first 128 amino acid residues. Phosphorylated at Thr-117 in response to signaling via TNF and TNFRSF1A. Phosphorylation at Thr-117 is required for 'Lys-63'-linked polyubiquitination, but not for 'Lys-48'-linked polyubiquitination. Phosphorylation at Thr-117 is important for interaction with IKKA and IKKB, activation of IKK and subsequent activation of NF-kappa-B. Post-translationally, undergoes both 'Lys-48'-linked and 'Lys-63'-linked polyubiquitination. Polyubiquitinated via 'Lys-63'-linked ubiquitin in response to TNF signaling; this requires prior phosphorylation at Thr-117. 'Lys-63'-linked polyubiquitination promotes TRAF2-mediated activation of NF-kappa-B. Can be polyubiquitinated at several Lys residues via 'Lys-48'-linked ubiquitin chains in response to TNF signaling, leading to proteasomal degradation. Autoubiquitinated, leading to its subsequent proteasomal degradation. Polyubiquitinated by BIRC2 and SIAH2, leading to its subsequent proteasomal degradation. Not ubiquitinated by BIRC3 or SIAH1. Deubiquitinated by CYLD, a protease that specifically cleaves 'Lys-63'-linked polyubiquitin chains. Ubiquination is inhibited by LRRC19; inhiits proteasomal degradation. Ubiquitinated at Lys-320 by the SCF(FBXL2) complex, leading to its degradation by the proteasome. Ubiquitinated by E3 ubiquitin-protein ligase complex containing FBXO7; leading to repression of NF-kappa-B signaling. As to expression, isoform 1 and isoform 2 are expressed in spleen, adipose tissues, skeletal muscles, thymus, testis, heart, lung, brain. Isoform 2 is very weakly expressed in heart, lung and brain.

Its subcellular location is the cytoplasm. The catalysed reaction is S-ubiquitinyl-[E2 ubiquitin-conjugating enzyme]-L-cysteine + [acceptor protein]-L-lysine = [E2 ubiquitin-conjugating enzyme]-L-cysteine + N(6)-ubiquitinyl-[acceptor protein]-L-lysine.. It participates in protein modification; protein ubiquitination. Has very low E3 ubiquitin ligase activity in the absence of sphingosine-1-phosphate. E3 ubiquitin ligase activity is strongly activated by cytoplasmic sphingosine-1-phosphate. Its function is as follows. E3 ubiquitin-protein ligase that regulates activation of NF-kappa-B and JNK and plays a central role in the regulation of cell survival and apoptosis. Catalyzes 'Lys-63'-linked ubiquitination of target proteins, such as BIRC3, IKBKE, MLST8, RIPK1 and TICAM1. Is an essential constituent of several E3 ubiquitin-protein ligase complexes, where it promotes the ubiquitination of target proteins by bringing them into contact with other E3 ubiquitin ligases. Regulates BIRC2 and BIRC3 protein levels by inhibiting their autoubiquitination and subsequent degradation; this does not depend on the TRAF2 RING-type zinc finger domain. Plays a role in mediating activation of NF-kappa-B by EIF2AK2/PKR. In complex with BIRC2 or BIRC3, promotes ubiquitination of IKBKE. Acts as a regulator of mTORC1 and mTORC2 assembly by mediating 'Lys-63'-linked ubiquitination of MLST8, thereby inhibiting formation of the mTORC2 complex, while facilitating assembly of the mTORC1 complex. Required for normal antibody isotype switching from IgM to IgG. In Mus musculus (Mouse), this protein is TNF receptor-associated factor 2 (Traf2).